The chain runs to 729 residues: Rab-like protein 6 (729 aa).

Position 1 is an N-acetylmethionine (Met-1). A small GTPase-like region spans residues 39 to 279 (GVQYNMKIVI…IFLEMMEARS (241 aa)). GTP-binding positions include 50 to 57 (GDRNTGKT), 100 to 104 (DVVDK), and 177 to 179 (YRD). Positions 281–729 (GHASPLAANG…HPGGGDYEEL (449 aa)) are disordered. The span at 290–315 (GQSPSPGSQSPVVPAGAVSTGSSSPG) shows a compositional bias: low complexity. The span at 331 to 351 (SSVPPVPPSEALPPPACPSAP) shows a compositional bias: pro residues. The span at 395–416 (PDDRLDRSFLEDTTPARDEKKV) shows a compositional bias: basic and acidic residues. 8 positions are modified to phosphoserine: Ser-402, Ser-425, Ser-427, Ser-470, Ser-471, Ser-492, Ser-525, and Ser-577. The span at 489–502 (QQCSEPETKWSSIP) shows a compositional bias: polar residues. Residues 581 to 595 (DTQRRADDFPVRDDP) show a composition bias toward basic and acidic residues. Position 596 is a phosphoserine (Ser-596). A compositionally biased stretch (acidic residues) spans 596–605 (SDVTDEDEGP). Thr-599 bears the Phosphothreonine mark. Residues 606–615 (AEPPPPPKLP) are compositionally biased toward pro residues. The span at 635-652 (AGPKESSEEGKEGKTPSK) shows a compositional bias: basic and acidic residues. A phosphoserine mark is found at Ser-640 and Ser-641. The tract at residues 655–693 (KKKKKKGKEEEEKAAKKKSKHKKSKDKEEGKEERRRRQQ) is interaction with CDKN2A. Residues 669-678 (AKKKSKHKKS) show a composition bias toward basic residues. Positions 679–689 (KDKEEGKEERR) are enriched in basic and acidic residues. A compositionally biased stretch (gly residues) spans 711-729 (LGGGAPGGRHPGGGDYEEL).

It belongs to the small GTPase superfamily. Rab family. Post-translationally, isoform 1 is O-glycosylated, while other isoforms are not.

It localises to the cytoplasm. Its subcellular location is the nucleus. In terms of biological role, may enhance cellular proliferation. May reduce growth inhibitory activity of CDKN2A. The protein is Rab-like protein 6 (RABL6) of Homo sapiens (Human).